The following is a 571-amino-acid chain: Probable serine/threonine-protein kinase WNK4 (571 aa).

The 259-residue stretch at 19–277 (GRFAEILGRG…AKELLQDPFL (259 aa)) folds into the Protein kinase domain. ATP is bound by residues 99 to 102 (TELF) and K149. D166 (proton acceptor) is an active-site residue. A disordered region spans residues 396 to 425 (EDDETPHDHHRHRTDSFHSSSSHASSSQAS). A compositionally biased stretch (low complexity) spans 412–425 (FHSSSSHASSSQAS). S522 carries the post-translational modification Phosphoserine.

This sequence belongs to the protein kinase superfamily. Ser/Thr protein kinase family. WNK subfamily.

The enzyme catalyses L-seryl-[protein] + ATP = O-phospho-L-seryl-[protein] + ADP + H(+). The catalysed reaction is L-threonyl-[protein] + ATP = O-phospho-L-threonyl-[protein] + ADP + H(+). Its function is as follows. May regulate flowering time by modulating the photoperiod pathway. This Arabidopsis thaliana (Mouse-ear cress) protein is Probable serine/threonine-protein kinase WNK4 (WNK4).